We begin with the raw amino-acid sequence, 287 residues long: Bifunctional protein FolD (287 aa).

Residues 168–170, Ser-193, and Ile-234 contribute to the NADP(+) site; that span reads GRS.

It belongs to the tetrahydrofolate dehydrogenase/cyclohydrolase family. As to quaternary structure, homodimer.

The enzyme catalyses (6R)-5,10-methylene-5,6,7,8-tetrahydrofolate + NADP(+) = (6R)-5,10-methenyltetrahydrofolate + NADPH. It carries out the reaction (6R)-5,10-methenyltetrahydrofolate + H2O = (6R)-10-formyltetrahydrofolate + H(+). Its pathway is one-carbon metabolism; tetrahydrofolate interconversion. Functionally, catalyzes the oxidation of 5,10-methylenetetrahydrofolate to 5,10-methenyltetrahydrofolate and then the hydrolysis of 5,10-methenyltetrahydrofolate to 10-formyltetrahydrofolate. This is Bifunctional protein FolD from Clostridioides difficile (strain 630) (Peptoclostridium difficile).